The chain runs to 369 residues: Probable methyltransferase TCM_000331 (369 aa).

Positions 18, 60, 65, 98, 99, 137, and 138 each coordinate S-adenosyl-L-homocysteine. 4 residues coordinate Mg(2+): Asn-176, Asp-261, Phe-263, and Asn-264.

The protein belongs to the methyltransferase superfamily. Type-7 methyltransferase family. The cofactor is Mg(2+).

This Theobroma cacao (Cacao) protein is Probable methyltransferase TCM_000331.